The chain runs to 584 residues: UvrABC system protein C (584 aa).

The GIY-YIG domain occupies 12 to 89 (NKPGCYLFLN…IKKYRPKYNV (78 aa)). The region spanning 194–229 (NQVKQTLVKQMQKASDNLQFEQAKRIKDQITSLDFI) is the UVR domain.

This sequence belongs to the UvrC family. As to quaternary structure, interacts with UvrB in an incision complex.

It is found in the cytoplasm. Functionally, the UvrABC repair system catalyzes the recognition and processing of DNA lesions. UvrC both incises the 5' and 3' sides of the lesion. The N-terminal half is responsible for the 3' incision and the C-terminal half is responsible for the 5' incision. The sequence is that of UvrABC system protein C from Mycoplasma capricolum subsp. capricolum (strain California kid / ATCC 27343 / NCTC 10154).